The primary structure comprises 141 residues: Endoribonuclease YbeY (141 aa).

Residues His-105, His-109, and Asp-115 each contribute to the Zn(2+) site.

The protein belongs to the endoribonuclease YbeY family. The cofactor is Zn(2+).

It localises to the cytoplasm. Functionally, single strand-specific metallo-endoribonuclease involved in late-stage 70S ribosome quality control and in maturation of the 3' terminus of the 16S rRNA. This chain is Endoribonuclease YbeY, found in Karelsulcia muelleri (strain GWSS) (Sulcia muelleri).